Here is a 484-residue protein sequence, read N- to C-terminus: Cobyric acid synthase (484 aa).

In terms of domain architecture, GATase cobBQ-type spans 249–438; it reads QLRVAVPVFT…LHGIFDRPET (190 aa). Residue C330 is the Nucleophile of the active site. Residue H430 is part of the active site.

The protein belongs to the CobB/CobQ family. CobQ subfamily.

It participates in cofactor biosynthesis; adenosylcobalamin biosynthesis. Its function is as follows. Catalyzes amidations at positions B, D, E, and G on adenosylcobyrinic A,C-diamide. NH(2) groups are provided by glutamine, and one molecule of ATP is hydrogenolyzed for each amidation. The chain is Cobyric acid synthase from Vibrio cholerae serotype O1 (strain ATCC 39541 / Classical Ogawa 395 / O395).